Consider the following 1315-residue polypeptide: Probable nucleoporin C890.06 (1315 aa).

It belongs to the non-repetitive/WGA-negative nucleoporin family.

Its subcellular location is the cytoplasm. It localises to the nucleus. The sequence is that of Probable nucleoporin C890.06 from Schizosaccharomyces pombe (strain 972 / ATCC 24843) (Fission yeast).